We begin with the raw amino-acid sequence, 663 residues long: MKHLVTTALAYTNGPLHLGHARSTYIPADIYTRYLRLKGEEVIHVGGTDNHGVPITLTAEREGVKPIDIVDRYHNAIKADLDSLNVSFDTFGRTHSDIHIETAQEFYSKLKENGYIYEKEIEQFYCEKCDMYLADRYVEGICPFCEGEARGDHCEVCGRHLEPTELVNPYCIHCNSKPEIKRTTHYFFKLSAMQDVLKEYIENSPEMPEHVKNMALRWIEELHDWDVSRNIKWGVPIPGCDDQVMYVWIEAPIGYVSFTKQLGDLWKDYWLENTGDSKISHFIGKDITVHHAVFWPGILKGIGGYKMPNAVVSGGYLTLENKKMSTSKNWVVWVKDFIENFSSDYLRYFFMINAPLNRDTDFSWDDFQKRINTELIDIIGNFTHRTLVFTERKFGSTPVVDLNQLKDEDKKLISKCEDTLNRVDSLIREYNFKDALMEIIHLAKEGNGYFQGMAPWAIKDEERLKEVMYTCSVALKYIVYLLSSFMPEKTALLLEYMNEELDLEVRGNPLKKPKVIFTKVSDEDISRMKENLMKATKKAETKSDEKSKKVKSGEKMDIIDIDYFGNIDLRVGQILEVEEVPRSKKLYKITADLGDEKRQIVSGLKGAYEAEELVGKKVIIICNLKPAKLCGVESQGMLLAAEDDSIVSLLALDRDLPVGSKIH.

Residues 10–20 (AYTNGPLHLGH) carry the 'HIGH' region motif. Zn(2+) is bound by residues Cys-142, Cys-145, Cys-154, and Cys-157. The 'KMSKS' region signature appears at 323-327 (KMSTS). ATP is bound at residue Thr-326. Positions 563-663 (YFGNIDLRVG…RDLPVGSKIH (101 aa)) constitute a tRNA-binding domain.

The protein belongs to the class-I aminoacyl-tRNA synthetase family. MetG type 1 subfamily. In terms of assembly, homodimer. Zn(2+) serves as cofactor.

It localises to the cytoplasm. It catalyses the reaction tRNA(Met) + L-methionine + ATP = L-methionyl-tRNA(Met) + AMP + diphosphate. Functionally, is required not only for elongation of protein synthesis but also for the initiation of all mRNA translation through initiator tRNA(fMet) aminoacylation. This Methanococcus maripaludis (strain C5 / ATCC BAA-1333) protein is Methionine--tRNA ligase.